The primary structure comprises 461 residues: Complement C1r subcomponent-like protein (461 aa).

An N-terminal signal peptide occupies residues 1-22 (MCWLLLWGILHTCPTQASVLLA). Positions 23–139 (QQFPQQLTSP…KGFLALYQAA (117 aa)) constitute a CUB domain. 2 disulfides stabilise this stretch: C71–C89 and C164–C197. Residues 138-199 (AAVSQPNGDA…RGEEVPECVP (62 aa)) form the Sushi domain. In terms of domain architecture, Peptidase S1 spans 214 to 453 (TFGSSRAKPG…YVDWIKGVIE (240 aa)). The active-site Charge relay system is the H252. N265 carries an N-linked (GlcNAc...) asparagine glycan. The active-site Charge relay system is D308. N332 is a glycosylation site (N-linked (GlcNAc...) asparagine). 2 disulfide bridges follow: C371/C390 and C401/C431. S405 acts as the Charge relay system in catalysis.

Belongs to the peptidase S1 family.

It localises to the secreted. In terms of biological role, mediates the proteolytic cleavage of HP/haptoglobin in the endoplasmic reticulum. The polypeptide is Complement C1r subcomponent-like protein (C1rl) (Rattus norvegicus (Rat)).